A 212-amino-acid chain; its full sequence is External core antigen (212 aa).

The signal sequence occupies residues 1-19; the sequence is MQLFHLCLIISCSCPTVQA. The segment at 25-27 is HBEAG; sequence GWL. The segment at 165–212 is disordered; sequence NAPILSTLPETTVVRRRGRSPRRRTPSPRRRRSQSPRRRRSQSRESQC. The span at 178–205 shows a compositional bias: basic residues; the sequence is VRRRGRSPRRRTPSPRRRRSQSPRRRRS. Residues 184–190 form a 1; half-length repeat; the sequence is SPRRRTP. Residues 184-206 are 3 X 8 AA repeats of S-P-R-R-R-R-S-Q; sequence SPRRRTPSPRRRRSQSPRRRRSQ. A propeptide spanning residues 184 to 212 is cleaved from the precursor; that stretch reads SPRRRTPSPRRRRSQSPRRRRSQSRESQC. Repeat copies occupy residues 191–198 and 199–206.

It belongs to the orthohepadnavirus precore antigen family. In terms of assembly, homodimerizes. Phosphorylated. In terms of processing, cleaved by host furin.

It is found in the secreted. The protein resides in the host nucleus. In terms of biological role, may regulate immune response to the intracellular capsid in acting as a T-cell tolerogen, by having an immunoregulatory effect which prevents destruction of infected cells by cytotoxic T-cells. This immune regulation may predispose to chronicity during perinatal infections and prevent severe liver injury during adult infections. This chain is External core antigen, found in Hepatitis B virus genotype B2 (isolate Indonesia/pIDW420/1988) (HBV-B).